A 448-amino-acid polypeptide reads, in one-letter code: Ribosomal protein uS12 methylthiotransferase RimO (448 aa).

The region spanning 16 to 126 is the MTTase N-terminal domain; that stretch reads PRISFVSLGC…VVAAVHEAVP (111 aa). [4Fe-4S] cluster-binding residues include Cys-25, Cys-61, Cys-90, Cys-157, Cys-161, and Cys-164. A Radical SAM core domain is found at 143-380; sequence LTPRHYAYLK…MEAQAGVSLK (238 aa). One can recognise a TRAM domain in the interval 383-448; it reads RAKVGKRLQV…DAYDLHGIAV (66 aa).

This sequence belongs to the methylthiotransferase family. RimO subfamily. [4Fe-4S] cluster is required as a cofactor.

It localises to the cytoplasm. It carries out the reaction L-aspartate(89)-[ribosomal protein uS12]-hydrogen + (sulfur carrier)-SH + AH2 + 2 S-adenosyl-L-methionine = 3-methylsulfanyl-L-aspartate(89)-[ribosomal protein uS12]-hydrogen + (sulfur carrier)-H + 5'-deoxyadenosine + L-methionine + A + S-adenosyl-L-homocysteine + 2 H(+). Catalyzes the methylthiolation of an aspartic acid residue of ribosomal protein uS12. The protein is Ribosomal protein uS12 methylthiotransferase RimO of Methylorubrum populi (strain ATCC BAA-705 / NCIMB 13946 / BJ001) (Methylobacterium populi).